Here is a 624-residue protein sequence, read N- to C-terminus: (-)-beta-phellandrene synthase 2, chloroplastic (624 aa).

The transit peptide at 1–48 (MAIVSSVPLASKSCLHKSLISSIHKLKPFCRTIPTLGMSRPGKYVMPS) directs the protein to the chloroplast. Mg(2+) is bound by residues D375, D379, and D527. The short motif at 375–379 (DDMYD) is the DDXXD motif element.

This sequence belongs to the terpene synthase family. Tpsd subfamily. Requires Mg(2+) as cofactor. The cofactor is Mn(2+).

It is found in the plastid. It localises to the chloroplast. It carries out the reaction (2E)-geranyl diphosphate = (-)-beta-phellandrene + diphosphate. It functions in the pathway terpene metabolism; oleoresin biosynthesis. Its function is as follows. Terpene synthase (TPS) involved in the biosynthesis of monoterpene natural products included in conifer oleoresin secretions and volatile emissions; these compounds contribute to biotic and abiotic stress defense against herbivores and pathogens. Catalyzes the conversion of (2E)-geranyl diphosphate (GPP) to (-)-beta-phellandrene. In Picea sitchensis (Sitka spruce), this protein is (-)-beta-phellandrene synthase 2, chloroplastic.